Consider the following 79-residue polypeptide: Large ribosomal subunit protein bL28 (79 aa).

A disordered region spans residues 1–26; it reads MAKVCQVTGKRPQSGNNVSHANKKTN. A compositionally biased stretch (polar residues) spans 11-20; sequence RPQSGNNVSH.

It belongs to the bacterial ribosomal protein bL28 family.

This chain is Large ribosomal subunit protein bL28, found in Coxiella burnetii (strain CbuK_Q154) (Coxiella burnetii (strain Q154)).